We begin with the raw amino-acid sequence, 189 residues long: Resolvase (189 aa).

Residues methionine 1–glycine 139 form the Resolvase/invertase-type recombinase catalytic domain. Serine 9 functions as the O-(5'-phospho-DNA)-serine intermediate in the catalytic mechanism. Residues glutamate 130–lysine 151 are disordered. The H-T-H motif DNA-binding region spans isoleucine 165–asparagine 184.

This sequence belongs to the site-specific recombinase resolvase family.

A likely role for the res protein would be to stabilize pIP404 by reducing the number of plasmid multimers resulting from homologous recombination. This is Resolvase (res) from Clostridium perfringens.